The primary structure comprises 357 residues: Dihydroorotate dehydrogenase (quinone) (357 aa).

Residues 67–71 and threonine 91 each bind FMN; that span reads AGFDK. A substrate-binding site is contributed by lysine 71. 116-120 contacts substrate; that stretch reads NRMGF. Residues asparagine 153 and asparagine 186 each coordinate FMN. Asparagine 186 serves as a coordination point for substrate. Serine 189 serves as the catalytic Nucleophile. Asparagine 191 provides a ligand contact to substrate. FMN contacts are provided by lysine 228 and threonine 256. 257 to 258 contributes to the substrate binding site; it reads NT. Residues glycine 282, glycine 311, and 332-333 each bind FMN; that span reads YT.

The protein belongs to the dihydroorotate dehydrogenase family. Type 2 subfamily. As to quaternary structure, monomer. FMN is required as a cofactor.

The protein resides in the cell membrane. The enzyme catalyses (S)-dihydroorotate + a quinone = orotate + a quinol. Its pathway is pyrimidine metabolism; UMP biosynthesis via de novo pathway; orotate from (S)-dihydroorotate (quinone route): step 1/1. In terms of biological role, catalyzes the conversion of dihydroorotate to orotate with quinone as electron acceptor. This chain is Dihydroorotate dehydrogenase (quinone), found in Arthrobacter sp. (strain FB24).